The following is a 187-amino-acid chain: NADH-quinone oxidoreductase subunit B (187 aa).

Residues C51, C52, C117, and C149 each contribute to the [4Fe-4S] cluster site.

Belongs to the complex I 20 kDa subunit family. NDH-1 is composed of 14 different subunits. Subunits NuoB, C, D, E, F, and G constitute the peripheral sector of the complex. Requires [4Fe-4S] cluster as cofactor.

Its subcellular location is the cell inner membrane. It catalyses the reaction a quinone + NADH + 5 H(+)(in) = a quinol + NAD(+) + 4 H(+)(out). NDH-1 shuttles electrons from NADH, via FMN and iron-sulfur (Fe-S) centers, to quinones in the respiratory chain. The immediate electron acceptor for the enzyme in this species is believed to be ubiquinone. Couples the redox reaction to proton translocation (for every two electrons transferred, four hydrogen ions are translocated across the cytoplasmic membrane), and thus conserves the redox energy in a proton gradient. The polypeptide is NADH-quinone oxidoreductase subunit B (Nitratidesulfovibrio vulgaris (strain DSM 19637 / Miyazaki F) (Desulfovibrio vulgaris)).